Here is a 221-residue protein sequence, read N- to C-terminus: MTYPERKAFVSRITNETKIQIAISLHGGHISIPNSILDRPESDVAKQATGSQIIDIQTGIGFLDHMIHALAKHSGWSLIVECIGDLHIDDHHTTEDWGFGSRTGFKEALGHVRGVRRFGTGFAPLDEALSRAVVDLSNRPFAVIDLGLKREKIGDLSCEMIPHFLESFAEAARVTLHVDCLRGFNDHHRSESAFKALAVAIREAISSNGTNDVPSTKGVLM.

It belongs to the imidazoleglycerol-phosphate dehydratase family.

The enzyme catalyses D-erythro-1-(imidazol-4-yl)glycerol 3-phosphate = 3-(imidazol-4-yl)-2-oxopropyl phosphate + H2O. Its pathway is amino-acid biosynthesis; L-histidine biosynthesis; L-histidine from 5-phospho-alpha-D-ribose 1-diphosphate: step 6/9. The sequence is that of Imidazoleglycerol-phosphate dehydratase (HIS3) from Kluyveromyces marxianus (Yeast).